Consider the following 229-residue polypeptide: ATPase SWSAP1 (229 aa).

Residues 209–229 (PWPTQAGDPSSGKGSSSGGQP) form a disordered region.

In terms of assembly, interacts with ZSWIM7; they form a functional complex involved in homologous recombination repair and stabilize each other. Interacts with RAD51, RAD51B, RAD51C, RAD51D and XRCC3; involved in homologous recombination repair.

The protein localises to the nucleus. In terms of biological role, ATPase which is preferentially stimulated by single-stranded DNA and is involved in homologous recombination repair (HRR). Has a DNA-binding activity which is independent of its ATPase activity. The protein is ATPase SWSAP1 (SWSAP1) of Homo sapiens (Human).